Consider the following 98-residue polypeptide: uncharacterized protein (98 aa).

This sequence belongs to the HesB/IscA family.

This is an uncharacterized protein from Staphylococcus saprophyticus subsp. saprophyticus (strain ATCC 15305 / DSM 20229 / NCIMB 8711 / NCTC 7292 / S-41).